Consider the following 619-residue polypeptide: Chaperone protein HscA homolog (619 aa).

This sequence belongs to the heat shock protein 70 family.

Its function is as follows. Chaperone involved in the maturation of iron-sulfur cluster-containing proteins. Has a low intrinsic ATPase activity which is markedly stimulated by HscB. The chain is Chaperone protein HscA homolog from Methylococcus capsulatus (strain ATCC 33009 / NCIMB 11132 / Bath).